Consider the following 207-residue polypeptide: Casparian strip membrane protein 1 (207 aa).

A compositionally biased stretch (polar residues) spans 1-12; the sequence is MEADSTTINVTE. Residues 1–20 are disordered; it reads MEADSTTINVTETPKERKGK. Residues 1–48 lie on the Cytoplasmic side of the membrane; it reads MEADSTTINVTETPKERKGKAPLLAAPPASSGVKRVLQKAPKGGYKRG. The chain crosses the membrane as a helical span at residues 49–69; the sequence is LAVFDVVLRLAGIATALGAAI. Topologically, residues 70–98 are extracellular; that stretch reads AMGSTDQTLPFFTQFFQFKAEFDDLPAFT. A helical transmembrane segment spans residues 99-119; it reads FFVIANAITAAYLALTIPISI. The Cytoplasmic portion of the chain corresponds to 120-131; that stretch reads VCIIRPHLVAPR. Residues 132–152 form a helical membrane-spanning segment; sequence VLLIFLDTVMVALTTAAAGGT. The Extracellular segment spans residues 153–184; the sequence is ASIVYLAHNGNSDANWPAICQQFNDXCQKVSG. A helical transmembrane segment spans residues 185–205; it reads AVVASFLTVVVLMLLIVLSAF. Residues 206 to 207 lie on the Cytoplasmic side of the membrane; sequence AL.

Belongs to the Casparian strip membrane proteins (CASP) family. Homodimer and heterodimers.

The protein resides in the cell membrane. In terms of biological role, regulates membrane-cell wall junctions and localized cell wall deposition. Required for establishment of the Casparian strip membrane domain (CSD) and the subsequent formation of Casparian strips, a cell wall modification of the root endodermis that determines an apoplastic barrier between the intraorganismal apoplasm and the extraorganismal apoplasm and prevents lateral diffusion. The chain is Casparian strip membrane protein 1 from Cynara cardunculus var. scolymus (Globe artichoke).